A 27-amino-acid polypeptide reads, in one-letter code: Omega-conotoxin RVIA (27 aa).

3 disulfide bridges follow: C1-C16, C8-C19, and C15-C26. P4 and P7 each carry 4-hydroxyproline.

This sequence belongs to the conotoxin O1 superfamily. In terms of tissue distribution, expressed by the venom duct.

It is found in the secreted. Its function is as follows. Omega-conotoxins act at presynaptic membranes, they bind and block voltage-gated calcium channels (Cav). In Conus radiatus (Rayed cone), this protein is Omega-conotoxin RVIA.